The primary structure comprises 171 residues: Adenine phosphoribosyltransferase (171 aa).

This sequence belongs to the purine/pyrimidine phosphoribosyltransferase family. Homodimer.

Its subcellular location is the cytoplasm. It carries out the reaction AMP + diphosphate = 5-phospho-alpha-D-ribose 1-diphosphate + adenine. It participates in purine metabolism; AMP biosynthesis via salvage pathway; AMP from adenine: step 1/1. Catalyzes a salvage reaction resulting in the formation of AMP, that is energically less costly than de novo synthesis. The polypeptide is Adenine phosphoribosyltransferase (Geobacter metallireducens (strain ATCC 53774 / DSM 7210 / GS-15)).